The chain runs to 426 residues: D-cysteine desulfhydrase 1, mitochondrial (426 aa).

The transit peptide at 1–63 (MARGAHQAPG…IGSFLSKRPY (63 aa)) directs the protein to the mitochondrion. Lysine 119 is modified (N6-(pyridoxal phosphate)lysine). Catalysis depends on serine 146, which acts as the Nucleophile.

This sequence belongs to the ACC deaminase/D-cysteine desulfhydrase family. In terms of assembly, homodimer. The cofactor is pyridoxal 5'-phosphate. As to expression, present in seeds (at protein level).

The protein resides in the mitochondrion. The enzyme catalyses D-cysteine + H2O = hydrogen sulfide + pyruvate + NH4(+) + H(+). With respect to regulation, inhibited by L-cysteine (L-cys). In terms of biological role, catalyzes the production of hydrogen sulfide (H2S) from D-cysteine (D-cys). This is D-cysteine desulfhydrase 1, mitochondrial from Oryza sativa subsp. japonica (Rice).